A 273-amino-acid chain; its full sequence is Phosphonates import ATP-binding protein PhnC (273 aa).

The ABC transporter domain maps to 2 to 245 (LRIDKLTKRF…VAREIYGADA (244 aa)). 34 to 41 (GRSGAGKS) is an ATP binding site.

The protein belongs to the ABC transporter superfamily. Phosphonates importer (TC 3.A.1.9.1) family. As to quaternary structure, the complex is composed of two ATP-binding proteins (PhnC), two transmembrane proteins (PhnE) and a solute-binding protein (PhnD).

It localises to the cell inner membrane. The enzyme catalyses phosphonate(out) + ATP + H2O = phosphonate(in) + ADP + phosphate + H(+). Part of the ABC transporter complex PhnCDE involved in phosphonates import. Responsible for energy coupling to the transport system. This chain is Phosphonates import ATP-binding protein PhnC, found in Ruegeria pomeroyi (strain ATCC 700808 / DSM 15171 / DSS-3) (Silicibacter pomeroyi).